The chain runs to 122 residues: Large ribosomal subunit protein uL14 (122 aa).

This sequence belongs to the universal ribosomal protein uL14 family. In terms of assembly, part of the 50S ribosomal subunit. Forms a cluster with proteins L3 and L19. In the 70S ribosome, L14 and L19 interact and together make contacts with the 16S rRNA in bridges B5 and B8.

Its function is as follows. Binds to 23S rRNA. Forms part of two intersubunit bridges in the 70S ribosome. This is Large ribosomal subunit protein uL14 from Syntrophomonas wolfei subsp. wolfei (strain DSM 2245B / Goettingen).